The chain runs to 183 residues: Phospholipase A2 inhibitor gamma subunit A1 (183 aa).

8 disulfide bridges follow: cysteine 3-cysteine 28, cysteine 6-cysteine 13, cysteine 21-cysteine 49, cysteine 55-cysteine 76, cysteine 77-cysteine 82, cysteine 100-cysteine 125, cysteine 118-cysteine 147, and cysteine 151-cysteine 173. A glycan (N-linked (GlcNAc...) asparagine) is linked at asparagine 158.

This sequence belongs to the CNF-like-inhibitor family. In terms of assembly, heterodimer of subunit A and subunit B. Expressed by the liver.

The protein resides in the secreted. In terms of biological role, phospholipase A2 (PA2) inhibitor. Inhibits the enzymatic activity of PA2 of Deinagkistrodon acutus. Also shows a wide anti-hemorrhage activities to D.acutus, Naja atra and Agkistrodon halys venom. The native protein is more potent than the recombinant one. This Trimerodytes annularis (Red-bellied annulate keelback) protein is Phospholipase A2 inhibitor gamma subunit A1.